The following is a 595-amino-acid chain: Aspartate--tRNA(Asp/Asn) ligase (595 aa).

Glu175 contacts L-aspartate. Residues 199–202 (QQYK) are aspartate. L-aspartate is bound by residues Arg221 and His454. ATP is bound at residue 221-223 (RDE). Glu488 is an ATP binding site. Arg495 lines the L-aspartate pocket. 540 to 543 (GIDR) is a binding site for ATP.

Belongs to the class-II aminoacyl-tRNA synthetase family. Type 1 subfamily. In terms of assembly, homodimer.

It localises to the cytoplasm. It catalyses the reaction tRNA(Asx) + L-aspartate + ATP = L-aspartyl-tRNA(Asx) + AMP + diphosphate. Its function is as follows. Aspartyl-tRNA synthetase with relaxed tRNA specificity since it is able to aspartylate not only its cognate tRNA(Asp) but also tRNA(Asn). Reaction proceeds in two steps: L-aspartate is first activated by ATP to form Asp-AMP and then transferred to the acceptor end of tRNA(Asp/Asn). The sequence is that of Aspartate--tRNA(Asp/Asn) ligase from Brucella abortus (strain S19).